Consider the following 473-residue polypeptide: Reticulon-4 receptor (473 aa).

Residues 1–26 (MKRASSGGSRLLAWVLWLQAWRVATP) form the signal peptide. 2 disulfides stabilise this stretch: cysteine 27/cysteine 33 and cysteine 31/cysteine 43. The LRRNT domain occupies 27–57 (CPGACVCYNEPKVTTSCPQQGLQAVPTGIPA). 9 LRR repeats span residues 56–79 (PASS…SFQS), 80–103 (CRNL…AFTG), 105–128 (TLLE…TFRG), 129–152 (LGHL…LFRG), 153–176 (LAAL…TFRD), 178–200 (GNLT…AFRG), 202–224 (HSLD…AFRD), 225–248 (LGRL…VLVP), and 250–273 (RSLQ…PLWA). Asparagine 82 carries an N-linked (GlcNAc...) asparagine glycan. Residues 260–310 (NPWVCDCRARPLWAWLQKFRGSSSEVPCNLPQRLAGRDLKRLAASDLEGCA) form the LRRCT domain. 3 disulfide bridges follow: cysteine 264/cysteine 287, cysteine 266/cysteine 335, and cysteine 309/cysteine 336. Residues 346–446 (VLEPGRPASA…GSSGTGDAEG (101 aa)) are disordered. The N-linked (GlcNAc...) asparagine glycan is linked to asparagine 372. Positions 413 to 429 (PRRRPGCSRKNRTRSHC) are enriched in basic residues. Residues 434-445 (AGSGSSGTGDAE) show a composition bias toward gly residues. The GPI-anchor amidated serine moiety is linked to residue serine 447. A propeptide spans 448–473 (GALPALACSLAPLGLALVLWTVLGPC) (removed in mature form).

It belongs to the Nogo receptor family. Homodimer. Interacts with MAG. Interacts with RTN4 and OMG. Interacts with LINGO1 and NGFR. Interacts with KIAA0319L. Interacts with OLFM1; this inhibits interaction with LINGO1 and NGFR. In terms of processing, N-glycosylated. O-glycosylated. Contains terminal sialic acid groups on its glycan chains. As to expression, detected in embryonic cerebellum, in spinal cord motor neurons and in dorsal root ganglia. Detected in adult brain, in neocortex, hippocampus, striatum, thalamus and dorsal root ganglion neurons (at protein level).

It localises to the cell membrane. The protein resides in the membrane raft. Its subcellular location is the cell projection. The protein localises to the dendrite. It is found in the perikaryon. It localises to the axon. Its function is as follows. Receptor for RTN4, OMG and MAG. Functions as a receptor for the sialylated gangliosides GT1b and GM1. Besides, functions as a receptor for chondroitin sulfate proteoglycans. Can also bind heparin. Intracellular signaling cascades are triggered via the coreceptor NGFR. Signaling mediates activation of Rho and downstream reorganization of the actin cytoskeleton. Mediates axonal growth inhibition. May play a role in regulating axon regeneration and neuronal plasticity in the adult central nervous system. Plays a role in postnatal brain development. Required for normal axon migration across the brain midline and normal formation of the corpus callosum. Protects motoneurons against apoptosis; protection against apoptosis is probably mediated via interaction with MAG. Acts in conjunction with RTN4 and LINGO1 in regulating neuronal precursor cell motility during cortical development. Like other family members, plays a role in restricting the number dendritic spines and the number of synapses that are formed during brain development. This Rattus norvegicus (Rat) protein is Reticulon-4 receptor (Rtn4r).